Consider the following 369-residue polypeptide: MFCCLGYEWLSGGCKTWHSAWVINTLADHRHRGTDFGGSPWLLIITVFLRSYKFAISLCTSYLCVSFLKTIFPSQNGHDGSTDVQQRARRSNCRRQEGIKIVLEDIFTLWRQVETKVRAKIRKMKVTTKVNRHDKINGKRKTAKEHLRKLSMKEREHGEKERQVSEAEENGKLDMKEIHTYMEMFQRAQALRRRAEDYYRCKITPSARKPLCNRVRMAAVEHRHSSGLPYWPYLTAETLKNRMGHQPPPPTQQHSIIDNSLSLKTPSECVLYPLPPSADDNLKTPPECLLTPLPPSALPSADDNLKTPAECLLYPLPPSADDNLKTPPECLLTPLPPSAPPSADDNLKTPPECVCSLPFHPQRMIISRN.

Residues 151-170 (SMKEREHGEKERQVSEAEEN) form a disordered region.

This sequence belongs to the NPIP family.

The polypeptide is Nuclear pore complex-interacting protein family member A6 (Homo sapiens (Human)).